Reading from the N-terminus, the 155-residue chain is RxLR effector protein 24 (155 aa).

The N-terminal stretch at 1–21 (MRLLIWVLFVTLVTFVSNTTA) is a signal peptide. A RxLR-dEER motif is present at residues 52 to 78 (RFLRTESKNDLKSDADTNGIDIEDEER). Residues 105–155 (EKAFQRMNQKGETPTTLAKRLDIGKTAEKRFEKTYEKYTAWWINHHTNAGT) form an RABA-binding domain region.

It belongs to the RxLR effector family. As to quaternary structure, interacts with Arabidopsis thaliana RABA GTPases including RABA1a, RABA1b, RABA1c, RABA1d, RABA1f, RABA2a, RABA2c, RABA2d, RABA4a, RABA4b and RABA4c.

It is found in the secreted. Its subcellular location is the host cell membrane. It localises to the host endomembrane system. In terms of biological role, effector protein that contributes to pathogen virulence. Targets members of the RABA GTPases subfamily to inhibit vesicular secretion, leading to an accumulation of secretory proteins in the endoplasmic reticulum. The sequence is that of RxLR effector protein 24 from Phytophthora brassicae.